The sequence spans 160 residues: uncharacterized protein (160 aa).

Tyr49 bears the Phosphotyrosine mark.

May be involved in the assembly, structure, or function of the flagellum. May polymerize to form a filamentous structure that is part of the flagellum. This is an uncharacterized protein from Bacillus subtilis (strain 168).